Here is a 250-residue protein sequence, read N- to C-terminus: Ferritin, chloroplastic (250 aa).

The N-terminal 49 residues, 1–49 (MALAPSKVSTFSGFSPKPSVGGAQKNPTCSVSLSFLNEKLGSRNLRVCA), are a transit peptide targeting the chloroplast. Residues 50–82 (STVPLTGVIFEPFEEVKKSELAVPTAPQVSLAR) are extension peptide (EP). Residues 83-236 (QNYADECESA…EYVAQLRRVG (154 aa)) enclose the Ferritin-like diiron domain. 5 residues coordinate Fe cation: Glu-100, Glu-135, His-138, Glu-184, and Gln-218.

The protein belongs to the ferritin family. As to quaternary structure, oligomer of 24 subunits. There are two types of subunits: L (light) chain and H (heavy) chain. The major chain can be light or heavy, depending on the species and tissue type. The functional molecule forms a roughly spherical shell with a diameter of 12 nm and contains a central cavity into which the insoluble mineral iron core is deposited.

The protein localises to the plastid. It is found in the chloroplast. It catalyses the reaction 4 Fe(2+) + O2 + 4 H(+) = 4 Fe(3+) + 2 H2O. Functionally, stores iron in a soluble, non-toxic, readily available form. Important for iron homeostasis. Has ferroxidase activity. Iron is taken up in the ferrous form and deposited as ferric hydroxides after oxidation. In Malus baccata var. xiaojinensis (Apple), this protein is Ferritin, chloroplastic.